The chain runs to 436 residues: DEAD-box ATP-dependent RNA helicase CshB (436 aa).

Residues 4–32 (QTFTQYDFKPFLIDAVRELRFTEPTGIQQ) carry the Q motif motif. Residues 35-209 (FPVVKKGVSV…KKYMENPEHI (175 aa)) form the Helicase ATP-binding domain. 48 to 55 (SQTGSGKT) contributes to the ATP binding site. A DEAD box motif is present at residues 157 to 160 (DEAD). In terms of domain architecture, Helicase C-terminal spans 240-388 (MLLQFKPYLA…WADLGERRRR (149 aa)). A disordered region spans residues 385–436 (RRRRKSRKKPNDELDVMATKVIKKPKKVKPNYKRKLATERDKVKRKYSNKKR). Basic residues-rich tracts occupy residues 405–419 (VIKKPKKVKPNYKRK) and 427–436 (VKRKYSNKKR).

This sequence belongs to the DEAD box helicase family. CshB subfamily.

The protein resides in the cytoplasm. It carries out the reaction ATP + H2O = ADP + phosphate + H(+). In terms of biological role, probable DEAD-box RNA helicase. May work in conjunction with the cold shock proteins to ensure proper initiation of transcription at low and optimal temperatures. Unwinds dsRNA in both 5'- and 3'-directions and shows RNA-dependent ATPase activity. Probably has a somewhat redundant function with CshA, as cshA can partially complement the growth effects of a cshB deletion. This Bacillus cereus (strain ATCC 14579 / DSM 31 / CCUG 7414 / JCM 2152 / NBRC 15305 / NCIMB 9373 / NCTC 2599 / NRRL B-3711) protein is DEAD-box ATP-dependent RNA helicase CshB.